We begin with the raw amino-acid sequence, 408 residues long: Argininosuccinate synthase (408 aa).

Residues 10-18 (AYSGGLDTS) and Ala37 each bind ATP. Tyr90 and Ser95 together coordinate L-citrulline. Gly120 serves as a coordination point for ATP. L-aspartate is bound by residues Thr122, Asn126, and Asp127. Asn126 is a binding site for L-citrulline. L-citrulline contacts are provided by Arg130, Ser181, Ser190, Glu266, and Tyr278.

Belongs to the argininosuccinate synthase family. Type 1 subfamily. Homotetramer.

It localises to the cytoplasm. The catalysed reaction is L-citrulline + L-aspartate + ATP = 2-(N(omega)-L-arginino)succinate + AMP + diphosphate + H(+). It participates in amino-acid biosynthesis; L-arginine biosynthesis; L-arginine from L-ornithine and carbamoyl phosphate: step 2/3. The chain is Argininosuccinate synthase from Laribacter hongkongensis (strain HLHK9).